The following is a 345-amino-acid chain: Telomere-binding protein cav (345 aa).

Positions 115 to 337 (RRKMVQPYPE…TITFQNTESE (223 aa)) are required for binding to Su(var)205. 2 disordered regions span residues 145–180 (RLDR…HEDQ) and 200–231 (PPGV…INRP). Short sequence motifs (su(var)205-binding Pro-containing repeat) lie at residues 231–237 (PETEINE) and 298–304 (PETEMNE).

Component of the HipHop-HOAP telomere capping complex, composed of at least HipHop and cav/HOAP, and may include Su(var)205/HP1; HipHop and cav/HOAP, but not Su(var)205, are interdependent for their protein stability. Interacts with HipHop (via N-terminus). Interacts (via C-terminus) with Su(var)205/HP1 dimer (via hinge and chromoshadow domain) and Orc1; possibly interacts with other components of the origin recognition complex (ORC). Each molecule of cav/HOAP interacts with 2 molecules of Su(var)205/HP1. The HipHop-HOAP complex recruits the MTV complex, consisting of moi/modigliani, tea and ver/verrocchio, to telomeres, forming the terminin telomere-capping complex. Interacts with moi/modigliani; the interaction is direct. Interacts with ver/verrochio; the interaction is direct. Interacts with HP6, which is also part of the terminin complex. Interacts (via N-terminus) with peo/pendolino (via N-terminus); the interaction is direct.

The protein resides in the nucleus. Its subcellular location is the chromosome. It is found in the telomere. Part of the HipHop-HOAP complex that recruits the MTV complex to form the terminin telomere-capping complex, which binds to chromosome ends in a sequence-independent manner and prevents telomere fusion. Telomere capping is independent of the origin recognition complex (ORC). This is Telomere-binding protein cav from Drosophila melanogaster (Fruit fly).